The chain runs to 350 residues: Probable dual-specificity RNA methyltransferase RlmN (350 aa).

The Proton acceptor role is filled by E98. The region spanning 104-334 (HTYGNSVCVS…VTVRRELGGD (231 aa)) is the Radical SAM core domain. A disulfide bridge links C111 with C339. The [4Fe-4S] cluster site is built by C118, C122, and C125. S-adenosyl-L-methionine-binding positions include 165–166 (GE), S197, 220–222 (SLH), and N296. The active-site S-methylcysteine intermediate is the C339.

It belongs to the radical SAM superfamily. RlmN family. Requires [4Fe-4S] cluster as cofactor.

It is found in the cytoplasm. It catalyses the reaction adenosine(2503) in 23S rRNA + 2 reduced [2Fe-2S]-[ferredoxin] + 2 S-adenosyl-L-methionine = 2-methyladenosine(2503) in 23S rRNA + 5'-deoxyadenosine + L-methionine + 2 oxidized [2Fe-2S]-[ferredoxin] + S-adenosyl-L-homocysteine. It carries out the reaction adenosine(37) in tRNA + 2 reduced [2Fe-2S]-[ferredoxin] + 2 S-adenosyl-L-methionine = 2-methyladenosine(37) in tRNA + 5'-deoxyadenosine + L-methionine + 2 oxidized [2Fe-2S]-[ferredoxin] + S-adenosyl-L-homocysteine. Specifically methylates position 2 of adenine 2503 in 23S rRNA and position 2 of adenine 37 in tRNAs. The chain is Probable dual-specificity RNA methyltransferase RlmN from Desulforamulus reducens (strain ATCC BAA-1160 / DSM 100696 / MI-1) (Desulfotomaculum reducens).